A 323-amino-acid polypeptide reads, in one-letter code: tRNA U34 carboxymethyltransferase (323 aa).

Carboxy-S-adenosyl-L-methionine is bound by residues Lys91, Trp105, Lys110, Gly130, 181–182 (IE), Met196, Tyr200, and Arg315.

This sequence belongs to the class I-like SAM-binding methyltransferase superfamily. CmoB family. As to quaternary structure, homotetramer.

The catalysed reaction is carboxy-S-adenosyl-L-methionine + 5-hydroxyuridine(34) in tRNA = 5-carboxymethoxyuridine(34) in tRNA + S-adenosyl-L-homocysteine + H(+). Its function is as follows. Catalyzes carboxymethyl transfer from carboxy-S-adenosyl-L-methionine (Cx-SAM) to 5-hydroxyuridine (ho5U) to form 5-carboxymethoxyuridine (cmo5U) at position 34 in tRNAs. This is tRNA U34 carboxymethyltransferase from Serratia proteamaculans (strain 568).